Reading from the N-terminus, the 320-residue chain is Adenosine receptor A3 (320 aa).

Topologically, residues 1-16 are extracellular; that stretch reads MKANNTTTSALWLQIT. Asn4 and Asn5 each carry an N-linked (GlcNAc...) asparagine glycan. A helical transmembrane segment spans residues 17 to 39; that stretch reads YITMEAAIGLCAVVGNMLVIWVV. Residues 40–50 lie on the Cytoplasmic side of the membrane; it reads KLNRTLRTTTF. Residues 51 to 74 form a helical membrane-spanning segment; that stretch reads YFIVSLALADIAVGVLVIPLAIAV. The Extracellular portion of the chain corresponds to 75–86; that stretch reads SLEVQMHFYACL. Cys85 and Cys168 form a disulfide bridge. Residues 87 to 108 form a helical membrane-spanning segment; the sequence is FMSCVLLVFTHASIMSLLAIAV. The Cytoplasmic portion of the chain corresponds to 109–128; sequence DRYLRVKLTVRYRTVTTQRR. The chain crosses the membrane as a helical span at residues 129-150; it reads IWLFLGLCWLVSFLVGLTPMFG. Residues 151–179 are Extracellular-facing; sequence WNRKVTLELSQNSSTLSCHFRSVVGLDYM. The helical transmembrane segment at 180–200 threads the bilayer; that stretch reads VFFSFITWILIPLVVMCIIYL. The Cytoplasmic portion of the chain corresponds to 201 to 233; sequence DIFYIIRNKLSQNLTGFRETRAFYGREFKTAKS. Residues 234-257 form a helical membrane-spanning segment; it reads LFLVLFLFALCWLPLSIINFVSYF. At 258–263 the chain is on the extracellular side; it reads NVKIPE. Residues 264–286 form a helical membrane-spanning segment; sequence IAMCLGILLSHANSMMNPIVYAC. The Cytoplasmic portion of the chain corresponds to 287–320; that stretch reads KIKKFKETYFVILRACRLCQTSDSLDSNLEQTTE. The S-palmitoyl cysteine moiety is linked to residue Cys305. 3 positions are modified to phosphothreonine: Thr307, Thr318, and Thr319.

The protein belongs to the G-protein coupled receptor 1 family. In terms of processing, phosphorylation on Thr-318 and Thr-319 may be crucial for rapid desensitization. Phosphorylation on Thr-318 may be necessary for phosphorylation on Thr-319 to occur. In terms of tissue distribution, testis, particularly in spermatocytes and spermatids but not in spermatogonia. Low levels in the brain.

The protein localises to the cell membrane. Receptor for adenosine. The activity of this receptor is mediated by G proteins which inhibits adenylyl cyclase. May play a role during reproduction. This is Adenosine receptor A3 (Adora3) from Rattus norvegicus (Rat).